The following is a 71-amino-acid chain: Gas vesicle protein A (71 aa).

Belongs to the gas vesicle GvpA family. As to quaternary structure, the gas vesicle shell is 2 nm thick and consists of a single layer of this protein. It forms helical ribs nearly perpendicular to the long axis of the vesicle.

It localises to the gas vesicle shell. Its function is as follows. Gas vesicles are hollow, gas filled proteinaceous nanostructures found in some microorganisms. During planktonic growth they allow positioning of the organism at a favorable depth for light or nutrient acquisition. GvpA forms the protein shell. In terms of biological role, cluster expression in E.coli (gvpA1-gvpA2-gvpC-gvpN-gvpJ-gvpK-gvpF-gvpG-gvpV-gvpW) allows cells to float and produces irregularly shaped gas vesicles. The protein is Gas vesicle protein A of Nostoc sp. (strain PCC 7120 / SAG 25.82 / UTEX 2576).